The sequence spans 466 residues: SVGFKAGVKDYRLTYYTPDYQTKDTDILAAFRVTPQPGVPPEEAGAAVAAESSTGTWTTVWTDGLTSLDRYKGRCYGIEPVAGEESQFIAYVAYPLDLFEEGSVTNMFTSIVGNVFGFKALRALRLEDLRIPVAYVKTFQGPXHGIQVERDKLNKYGRPLLGCTIKPKLGLSAKNYGRAVYECLRGGLDFTKDDENVNSQPFMRWRDRFVSXAEALYKAQAETGEIKGHYLNATAGTCEEMMKRAVFARELGVPIVMHDYLTGGFTANTTLAHYCRDNGLLLHIHRAMHAVIDRQKNHGMTFRVLAKGLRMSGGDHIHSGTVVGKLEGERDITLGFVDLLRDDFIEKDRSRGIYFTQDWVSLPGVLPVASGGIHVXHMPALTEIFGDDSVLQFGGGTLGHPWGNRPGAVANRVALEACVQARNEGRDLAREGNEIIREAAKWSPELAAACEVWKEIKFEFAAMDVL.

An N6,N6,N6-trimethyllysine modification is found at K5. Substrate-binding residues include N114 and T164. The active-site Proton acceptor is the K166. K168 serves as a coordination point for substrate. Mg(2+)-binding residues include K192, D194, and E195. K192 bears the N6-carboxylysine mark. H285 (proton acceptor) is an active-site residue. Substrate is bound by residues R286, H318, and S370.

Belongs to the RuBisCO large chain family. Type I subfamily. Heterohexadecamer of 8 large chains and 8 small chains; disulfide-linked. The disulfide link is formed within the large subunit homodimers. Requires Mg(2+) as cofactor. Post-translationally, the disulfide bond which can form in the large chain dimeric partners within the hexadecamer appears to be associated with oxidative stress and protein turnover.

Its subcellular location is the plastid. The protein localises to the chloroplast. It catalyses the reaction 2 (2R)-3-phosphoglycerate + 2 H(+) = D-ribulose 1,5-bisphosphate + CO2 + H2O. The catalysed reaction is D-ribulose 1,5-bisphosphate + O2 = 2-phosphoglycolate + (2R)-3-phosphoglycerate + 2 H(+). In terms of biological role, ruBisCO catalyzes two reactions: the carboxylation of D-ribulose 1,5-bisphosphate, the primary event in carbon dioxide fixation, as well as the oxidative fragmentation of the pentose substrate in the photorespiration process. Both reactions occur simultaneously and in competition at the same active site. In Hedera helix (English ivy), this protein is Ribulose bisphosphate carboxylase large chain.